A 299-amino-acid chain; its full sequence is Regucalcin (299 aa).

Glutamate 18 lines the a divalent metal cation pocket. Positions 101, 103, and 121 each coordinate substrate. Lysine 144 carries the post-translational modification N6-succinyllysine. A divalent metal cation is bound by residues asparagine 154 and aspartate 204. The Proton donor/acceptor role is filled by aspartate 204. N6-succinyllysine occurs at positions 244 and 253.

It belongs to the SMP-30/CGR1 family. As to quaternary structure, monomer. Requires Zn(2+) as cofactor. Mn(2+) serves as cofactor. It depends on Ca(2+) as a cofactor. Mg(2+) is required as a cofactor.

It is found in the cytoplasm. It catalyses the reaction D-glucono-1,5-lactone + H2O = D-gluconate + H(+). Functionally, gluconolactonase with low activity towards other sugar lactones, including gulonolactone and galactonolactone. Can also hydrolyze diisopropyl phosphorofluoridate and phenylacetate (in vitro). Calcium-binding protein. Modulates Ca(2+) signaling, and Ca(2+)-dependent cellular processes and enzyme activities. The polypeptide is Regucalcin (RGN) (Macaca fascicularis (Crab-eating macaque)).